A 256-amino-acid chain; its full sequence is Major prion protein (256 aa).

The first 24 residues, 1-24, serve as a signal peptide directing secretion; sequence MVKSHIGSWILVLFVAMWSDVGLC. Residues 25–233 are interaction with GRB2, ERI3 and SYN1; sequence KKRPKPGGGW…ESQAYYQRGA (209 aa). The tract at residues 28–110 is disordered; it reads PKPGGGWNTG…QWNKPSKPKT (83 aa). 5 repeat units span residues 54–62, 63–70, 71–78, 79–86, and 87–95. Positions 54–95 are 5 X 8 AA tandem repeats of P-H-G-G-G-W-G-Q; it reads PQGGGGWGQPHGGGWGQPHGGGWGQPHGGGWGQPHGGGGWGQ. Residues 55 to 97 show a composition bias toward gly residues; that stretch reads QGGGGWGQPHGGGWGQPHGGGWGQPHGGGWGQPHGGGGWGQGG. His-64, Gly-65, Gly-66, His-72, Gly-73, Gly-74, His-80, Gly-81, Gly-82, His-88, Gly-90, and Gly-91 together coordinate Cu(2+). A disulfide bridge links Cys-182 with Cys-217. Asn-184 and Asn-200 each carry an N-linked (GlcNAc...) asparagine glycan. Ala-233 is lipidated: GPI-anchor amidated alanine. Positions 234 to 256 are cleaved as a propeptide — removed in mature form; the sequence is SVILFSSPPVILLISFLIFLIVG.

Belongs to the prion family. As to quaternary structure, monomer and homodimer. Has a tendency to aggregate into amyloid fibrils containing a cross-beta spine, formed by a steric zipper of superposed beta-strands. Soluble oligomers may represent an intermediate stage on the path to fibril formation. Copper binding may promote oligomerization. Interacts with GRB2, APP, ERI3/PRNPIP and SYN1. Mislocalized cytosolically exposed PrP interacts with MGRN1; this interaction alters MGRN1 subcellular location and causes lysosomal enlargement. Interacts with KIAA1191.

Its subcellular location is the cell membrane. It localises to the golgi apparatus. Its function is as follows. Its primary physiological function is unclear. Has cytoprotective activity against internal or environmental stresses. May play a role in neuronal development and synaptic plasticity. May be required for neuronal myelin sheath maintenance. May play a role in iron uptake and iron homeostasis. Soluble oligomers are toxic to cultured neuroblastoma cells and induce apoptosis (in vitro). Association with GPC1 (via its heparan sulfate chains) targets PRNP to lipid rafts. Also provides Cu(2+) or Zn(2+) for the ascorbate-mediated GPC1 deaminase degradation of its heparan sulfate side chains. This chain is Major prion protein (PRNP), found in Odocoileus hemionus (Mule deer).